We begin with the raw amino-acid sequence, 92 residues long: Large ribosomal subunit protein eL43 (92 aa).

Zn(2+) contacts are provided by Cys-39, Cys-42, Cys-57, and Cys-60. The segment at 39–60 (CSFCGKTKMKRKAVGIWHCGSC) adopts a C4-type zinc-finger fold.

It belongs to the eukaryotic ribosomal protein eL43 family. In terms of assembly, component of the large ribosomal subunit.

Its subcellular location is the cytoplasm. In terms of biological role, component of the large ribosomal subunit. The ribosome is a large ribonucleoprotein complex responsible for the synthesis of proteins in the cell. The polypeptide is Large ribosomal subunit protein eL43 (RPL37A) (Gallus gallus (Chicken)).